Reading from the N-terminus, the 404-residue chain is Zinc metalloprotease Rip1 (404 aa).

The helical transmembrane segment at Met-1–His-21 threads the bilayer. His-21 contacts Zn(2+). Residue Glu-22 is part of the active site. His-25 lines the Zn(2+) pocket. The chain crosses the membrane as a helical span at residues Pro-104–Leu-124. Residues Val-121–Gly-203 enclose the PDZ domain. Asp-202 serves as a coordination point for Zn(2+). Helical transmembrane passes span Leu-313–Leu-333 and Leu-373–Thr-393.

The protein belongs to the peptidase M50B family. It depends on Zn(2+) as a cofactor.

The protein resides in the cell membrane. In terms of biological role, a probable intramembrane site-2 protease (S2P) that cleaves type-2 transmembrane proteins within their membrane-spanning domains. Cleaves PbpB (PBP3, FtsI); cleavage is inhibited by Wag31-PbpB interaction. Probably also cleaves anti-sigma factors RskA, RslA and RsmA. Regulated intramembrane proteolysis (RIP) occurs when an extracytoplasmic signal (possibly oxidative stress) triggers a concerted proteolytic cascade to transmit information and elicit cellular responses. The membrane-spanning regulatory substrate protein (includes anti-sigma factors RskA, RslA, RsmA, and PbpB in M.tuberculosis) is first cut extracytoplasmically (site-1 protease, S1P), then within the membrane itself (site-2 protease, S2P, this entry), while cytoplasmic proteases finish degrading the regulatory protein, liberating the effector protein (ECF sigma factors SigK, SigL and SigM). In Mycobacterium bovis (strain BCG / Pasteur 1173P2), this protein is Zinc metalloprotease Rip1 (rip1).